We begin with the raw amino-acid sequence, 158 residues long: Lipoprotein signal peptidase (158 aa).

A run of 4 helical transmembrane segments spans residues 7–27 (LFWI…YWVV), 38–58 (ILPG…FSLF), 67–87 (WLSL…PVLD), and 95–115 (GLIL…GYVV). Residues aspartate 116 and aspartate 132 contribute to the active site. Residues 125-145 (FAVFNMADSFISIGIVCLLLA) form a helical membrane-spanning segment.

It belongs to the peptidase A8 family.

The protein localises to the cell inner membrane. It carries out the reaction Release of signal peptides from bacterial membrane prolipoproteins. Hydrolyzes -Xaa-Yaa-Zaa-|-(S,diacylglyceryl)Cys-, in which Xaa is hydrophobic (preferably Leu), and Yaa (Ala or Ser) and Zaa (Gly or Ala) have small, neutral side chains.. It functions in the pathway protein modification; lipoprotein biosynthesis (signal peptide cleavage). Its function is as follows. This protein specifically catalyzes the removal of signal peptides from prolipoproteins. This Nostoc sp. (strain PCC 7120 / SAG 25.82 / UTEX 2576) protein is Lipoprotein signal peptidase.